A 395-amino-acid polypeptide reads, in one-letter code: XK-related protein 8 (395 aa).

Residues 1 to 12 (MPWSSRGALLRD) lie on the Cytoplasmic side of the membrane. A helical membrane pass occupies residues 13-33 (LVLGVLGTAAFLLDLGTDLWA). Residues 34–47 (AVQYALGGRYLWAA) are Extracellular-facing. The helical transmembrane segment at 48 to 68 (LVLALLGLASVALQLFSWLWL) threads the bilayer. Topologically, residues 69-158 (RADPAGLHGS…VLAIMLQSGR (90 aa)) are cytoplasmic. The chain crosses the membrane as a helical span at residues 159 to 179 (AEYYQWVGICTSFLGISWALL). The Extracellular portion of the chain corresponds to 180 to 200 (DYHRALRTCLPSRPLLGLGSS). The helical transmembrane segment at 201 to 221 (VIYFLWNLLLLWPRVLAVALF) threads the bilayer. Residues 222 to 223 (SA) are Cytoplasmic-facing. A helical membrane pass occupies residues 224 to 244 (LFPSYVALHFLGLWLVLLLWV). At 245-258 (WLQGTDFMPDPSSE) the chain is on the extracellular side. The chain crosses the membrane as a helical span at residues 259–279 (WLYQVTVATILYFSWFNVAEG). The Cytoplasmic segment spans residues 280 to 284 (RTRGR). The chain crosses the membrane as a helical span at residues 285–305 (AIIHFAFLLSDSILLVATWVT). Residues 306–312 (HSSWLPS) lie on the Extracellular side of the membrane. A helical transmembrane segment spans residues 313 to 333 (GIPLQLWLPVGCGCFFLGLAL). Over 334-395 (RLVYYHWLHP…KDEAALPVKG (62 aa)) the chain is Cytoplasmic. Ser-362 is modified (phosphoserine). At Thr-375 the chain carries Phosphothreonine.

Belongs to the XK family. As to quaternary structure, interacts with BSG and NPTN; which act as chaperones to localize XKR8 at the cell membrane. In terms of assembly, homodimer. In terms of processing, undergoes proteolytic processing by caspase-3 (CASP3), leading to its activation. Phosphorylation at Thr-375 activates the phospholipid scramblase activity.

Its subcellular location is the cell membrane. It localises to the cytoplasm. The protein localises to the perinuclear region. It catalyses the reaction a 1,2-diacyl-sn-glycero-3-phospho-L-serine(in) = a 1,2-diacyl-sn-glycero-3-phospho-L-serine(out). Its activity is regulated as follows. Activated upon caspase cleavage to generate the XK-related protein 8, processed form. Does not act prior the onset of apoptosis. In terms of biological role, phospholipid scramblase that promotes phosphatidylserine exposure on apoptotic cell surface. Phosphatidylserine is a specific marker only present at the surface of apoptotic cells and acts as a specific signal for engulfment. Required for the clearance of apoptotic cells, such as engulfment of apoptotic germ cells by Sertoli cells, clearance of senescent neutrophils or regulation of bipolar cell numbers in the retina. Has no effect on calcium-induced exposure of phosphatidylserine. Promotes myoblast differentiation and survival. In Pan troglodytes (Chimpanzee), this protein is XK-related protein 8.